The chain runs to 396 residues: Putative O-antigen transporter (396 aa).

A run of 11 helical transmembrane segments spans residues 5-25 (ILLLFLVHGANYLFPFIVLPY), 32-52 (IETFADVAKIQAAVMLLSLIV), 82-102 (IVKLLLATICLALGCVHLMYV), 107-127 (LIYPFIISSIYLYGSALFATW), 137-157 (AVVIATTIAKLTGVILTFILV), 163-183 (IVAALFTQNIGMFISGIISIY), 211-231 (FFLSLAATSVYTYFNVILLSF), 286-306 (AIFGVCISAGLVFLGPMLTTI), 322-342 (MFLLPATISISTILSQWMLIP), 348-368 (ILSRIYILGAIVHLLYAFPLV), and 372-392 (GAWGMVISILFTEVLIVLFML).

It belongs to the polysaccharide synthase family.

Its subcellular location is the cell inner membrane. Its pathway is bacterial outer membrane biogenesis; LPS O-antigen biosynthesis. May be involved in the translocation process of the nascent O-polysaccharide molecules and/or its ligation to lipid A core units. The polypeptide is Putative O-antigen transporter (rfbX) (Shigella dysenteriae).